Reading from the N-terminus, the 187-residue chain is Peptidyl-tRNA hydrolase (187 aa).

Y18 is a tRNA binding site. H23 (proton acceptor) is an active-site residue. Positions 65, 67, and 113 each coordinate tRNA.

It belongs to the PTH family. Monomer.

Its subcellular location is the cytoplasm. It catalyses the reaction an N-acyl-L-alpha-aminoacyl-tRNA + H2O = an N-acyl-L-amino acid + a tRNA + H(+). In terms of biological role, hydrolyzes ribosome-free peptidyl-tRNAs (with 1 or more amino acids incorporated), which drop off the ribosome during protein synthesis, or as a result of ribosome stalling. Catalyzes the release of premature peptidyl moieties from peptidyl-tRNA molecules trapped in stalled 50S ribosomal subunits, and thus maintains levels of free tRNAs and 50S ribosomes. This chain is Peptidyl-tRNA hydrolase, found in Coxiella burnetii (strain CbuG_Q212) (Coxiella burnetii (strain Q212)).